Here is a 422-residue protein sequence, read N- to C-terminus: UDP-N-acetylglucosamine 1-carboxyvinyltransferase (422 aa).

22–23 provides a ligand contact to phosphoenolpyruvate; that stretch reads KN. Arg-93 lines the UDP-N-acetyl-alpha-D-glucosamine pocket. The active-site Proton donor is the Cys-117. At Cys-117 the chain carries 2-(S-cysteinyl)pyruvic acid O-phosphothioketal. UDP-N-acetyl-alpha-D-glucosamine-binding positions include 122–126, Asp-308, and Leu-330; that span reads RPVDL.

It belongs to the EPSP synthase family. MurA subfamily.

Its subcellular location is the cytoplasm. The enzyme catalyses phosphoenolpyruvate + UDP-N-acetyl-alpha-D-glucosamine = UDP-N-acetyl-3-O-(1-carboxyvinyl)-alpha-D-glucosamine + phosphate. It functions in the pathway cell wall biogenesis; peptidoglycan biosynthesis. Cell wall formation. Adds enolpyruvyl to UDP-N-acetylglucosamine. This Helicobacter pylori (strain ATCC 700392 / 26695) (Campylobacter pylori) protein is UDP-N-acetylglucosamine 1-carboxyvinyltransferase.